Here is a 90-residue protein sequence, read N- to C-terminus: YcgL domain-containing protein plu2139 (90 aa).

Residues 1-85 (MICAIYSSPK…PVENLMNAHL (85 aa)) enclose the YcgL domain.

This is YcgL domain-containing protein plu2139 from Photorhabdus laumondii subsp. laumondii (strain DSM 15139 / CIP 105565 / TT01) (Photorhabdus luminescens subsp. laumondii).